A 305-amino-acid chain; its full sequence is Flagellin FlaB2 (305 aa).

Positions 1 to 18 are cleaved as a propeptide — propeptide; it reads MGLQKIVKKYNKKMKRKG.

This sequence belongs to the archaeal flagellin family. Glycosylated.

The protein resides in the archaeal flagellum. Flagellin is the subunit protein which polymerizes to form the filaments of archaeal flagella. This is Flagellin FlaB2 from Saccharolobus shibatae (strain ATCC 51178 / DSM 5389 / JCM 8931 / NBRC 15437 / B12) (Sulfolobus shibatae).